Reading from the N-terminus, the 103-residue chain is Small ribosomal subunit protein uS10 (103 aa).

Belongs to the universal ribosomal protein uS10 family. Part of the 30S ribosomal subunit.

Functionally, involved in the binding of tRNA to the ribosomes. The polypeptide is Small ribosomal subunit protein uS10 (Pseudoalteromonas translucida (strain TAC 125)).